Consider the following 192-residue polypeptide: UPF0149 protein KPK_0755 (192 aa).

This sequence belongs to the UPF0149 family.

This Klebsiella pneumoniae (strain 342) protein is UPF0149 protein KPK_0755.